The sequence spans 272 residues: MVKEISVGNVKIGGDRPLVLIAGPCVIENEVATMRCAERLMTICNGVSIPLIFKASYDKANRTSVNSFRGPGMKDGLKILKKVKEALGVPVLSDIHSIEQVEPAAEVLDVVQIPAFLCRQTDLVVAAARSGKVVNIKKGQFLAPWDMENVAGKAVSTGNDNIILTERGVSFGYNNLVSDMRSFPILRKIGYPVVFDATHSVQLPGGLGGSSGGQREFVEYLGRAAVATGIDGIFMEVHDDPEKALCDGPNSVKLEDLPALLKKLKAIDAIVK.

This sequence belongs to the KdsA family.

The protein localises to the cytoplasm. It catalyses the reaction D-arabinose 5-phosphate + phosphoenolpyruvate + H2O = 3-deoxy-alpha-D-manno-2-octulosonate-8-phosphate + phosphate. It functions in the pathway carbohydrate biosynthesis; 3-deoxy-D-manno-octulosonate biosynthesis; 3-deoxy-D-manno-octulosonate from D-ribulose 5-phosphate: step 2/3. It participates in bacterial outer membrane biogenesis; lipopolysaccharide biosynthesis. This is 2-dehydro-3-deoxyphosphooctonate aldolase from Geotalea uraniireducens (strain Rf4) (Geobacter uraniireducens).